We begin with the raw amino-acid sequence, 392 residues long: Magnesium-chelatase 38 kDa subunit (392 aa).

Low complexity predominate over residues 1 to 17 (MTQTANAAKKTTSTKAS). A disordered region spans residues 1–21 (MTQTANAAKKTTSTKASAAKE). 80 to 87 (GHRGTGKS) is an ATP binding site.

This sequence belongs to the Mg-chelatase subunits D/I family.

It carries out the reaction protoporphyrin IX + Mg(2+) + ATP + H2O = Mg-protoporphyrin IX + ADP + phosphate + 3 H(+). Its pathway is porphyrin-containing compound metabolism; bacteriochlorophyll biosynthesis. Functionally, involved in bacteriochlorophyll biosynthesis; introduces a magnesium ion into protoporphyrin IX to yield Mg-protoporphyrin IX. The polypeptide is Magnesium-chelatase 38 kDa subunit (bchI) (Chlorobaculum tepidum (strain ATCC 49652 / DSM 12025 / NBRC 103806 / TLS) (Chlorobium tepidum)).